The primary structure comprises 346 residues: Protein SHI RELATED SEQUENCE 5 (346 aa).

Positions 7-31 (LGGRDNNSNNNKQDHHQVDKDHHHQ) are disordered. The span at 18-31 (KQDHHQVDKDHHHQ) shows a compositional bias: basic and acidic residues. Cysteine 125, cysteine 128, cysteine 136, cysteine 141, cysteine 145, and cysteine 152 together coordinate Zn(2+). The zn(2)-C6 fungal-type; degenerate DNA-binding region spans 125-152 (CQDCGNQAKKDCPHMRCRTCCKSRGFHC). Residues 175–186 (SLQHHSASSRET) are compositionally biased toward polar residues. Residues 175–215 (SLQHHSASSRETQNAKRLREASGGDNNDDKDHSGGGGSALA) are disordered. Positions 187–207 (QNAKRLREASGGDNNDDKDHS) are enriched in basic and acidic residues. A Required for homo- and heterodimerization motif is present at residues 269-272 (IGGH).

The protein belongs to the SHI protein family.

The protein resides in the nucleus. Transcription activator that binds DNA on 5'-ACTCTAC-3' and promotes auxin homeostasis-regulating gene expression (e.g. YUC genes), as well as genes affecting stamen development, cell expansion and timing of flowering. Synergistically with other SHI-related proteins, regulates gynoecium, stamen and leaf development in a dose-dependent manner, controlling apical-basal patterning. Promotes style and stigma formation, and influences vascular development during gynoecium development. May also have a role in the formation and/or maintenance of the shoot apical meristem (SAM). The protein is Protein SHI RELATED SEQUENCE 5 (SRS5) of Arabidopsis thaliana (Mouse-ear cress).